A 125-amino-acid polypeptide reads, in one-letter code: Calcitonin gene-related peptide 1 (125 aa).

A signal peptide spans 1 to 25 (MVMLKISSFLAVYALVVCQMDSFQA). A propeptide spanning residues 26–77 (APVRPGLESITDRVTLSDYEARRLLNALVKDFIQMTAEELEQASEGNSVTAQ) is cleaved from the precursor. A disulfide bridge connects residues cysteine 81 and cysteine 86. Phenylalanine 116 bears the Phenylalanine amide mark. Residues 122–125 (SVQI) constitute a propeptide that is removed on maturation.

It belongs to the calcitonin family.

Its subcellular location is the secreted. In terms of biological role, CGRP1/CALCA is a peptide hormone that induces vasodilation mediated by the CALCRL-RAMP1 receptor complex. Dilates a variety of vessels including the coronary, cerebral and systemic vasculature. Its abundance in the CNS also points toward a neurotransmitter or neuromodulator role. It also elevates platelet cAMP. CGRP1 can also bind and activate CALCR-RAMP1 (AMYR1) receptor complex. In Gallus gallus (Chicken), this protein is Calcitonin gene-related peptide 1 (CALCA).